A 146-amino-acid chain; its full sequence is 3-hydroxyacyl-[acyl-carrier-protein] dehydratase FabZ (146 aa).

H49 is a catalytic residue.

The protein belongs to the thioester dehydratase family. FabZ subfamily.

The protein localises to the cytoplasm. It carries out the reaction a (3R)-hydroxyacyl-[ACP] = a (2E)-enoyl-[ACP] + H2O. Its function is as follows. Involved in unsaturated fatty acids biosynthesis. Catalyzes the dehydration of short chain beta-hydroxyacyl-ACPs and long chain saturated and unsaturated beta-hydroxyacyl-ACPs. The chain is 3-hydroxyacyl-[acyl-carrier-protein] dehydratase FabZ from Pseudomonas fluorescens (strain ATCC BAA-477 / NRRL B-23932 / Pf-5).